The following is a 341-amino-acid chain: Pre-mRNA-processing protein 45 (341 aa).

Disordered regions lie at residues 1 to 31 (MFSS…HEKS), 181 to 226 (NYQE…EDQA), and 302 to 341 (EQHE…KTKY). The segment covering 192 to 201 (FKLRKNRHKN) has biased composition (basic residues). Basic and acidic residues predominate over residues 302–318 (EQHEKENKLKELADIAR).

This sequence belongs to the SNW family. As to quaternary structure, associated with the spliceosome.

The protein localises to the nucleus. In terms of biological role, involved in pre-mRNA splicing. This chain is Pre-mRNA-processing protein 45 (PRP45), found in Debaryomyces hansenii (strain ATCC 36239 / CBS 767 / BCRC 21394 / JCM 1990 / NBRC 0083 / IGC 2968) (Yeast).